The sequence spans 554 residues: Hyaluronan synthase 3 (554 aa).

The Cytoplasmic segment spans residues 1 to 15; the sequence is MPVQLTTALRVVGTS. A helical transmembrane segment spans residues 16 to 36; it reads LFALVVLGGILAAYVTGYQFI. Residues 37-44 lie on the Extracellular side of the membrane; it reads HTEKHYLS. A helical transmembrane segment spans residues 45 to 65; sequence FGLYGAILGLHLLIQSLFAFL. Residues 66–378 lie on the Cytoplasmic side of the membrane; it reads EHRRMRRAGR…NSLWFHKHHL (313 aa). Residues 379 to 399 traverse the membrane as a helical segment; the sequence is WMTYESVVTGFFPFFLIATVI. The Extracellular portion of the chain corresponds to 400 to 409; that stretch reads QLFYRGRIWN. A helical membrane pass occupies residues 410 to 430; that stretch reads ILLFLLTVQLVGIIKATYACF. The Cytoplasmic segment spans residues 431–441; the sequence is LRGNAEMIFMS. A helical transmembrane segment spans residues 442-462; that stretch reads LYSLLYMSSLLPAKIFAIATI. A glycan (N-linked (GlcNAc...) asparagine) is linked at Asn463. At 463–474 the chain is on the extracellular side; sequence NKSGWGTSGRKT. A helical membrane pass occupies residues 475 to 495; it reads IVVNFIGLIPVSIWVAVLLGG. Residues 496–516 lie on the Cytoplasmic side of the membrane; that stretch reads LAYTAYCQDLFSETELAFLVS. Residues 517-537 traverse the membrane as a helical segment; sequence GAILYGCYWVALLMLYLAIIA. Topologically, residues 538–554 are extracellular; sequence RRCGKKPEQYSLAFAEV.

The protein belongs to the NodC/HAS family. Requires Mg(2+) as cofactor. Post-translationally, O-GlcNAcylation increases the hyaluronan synthase activity, HAS3 stability and its plasma membrane residence. The concentration of UDP-GlcNAc controls the level of O-GlcNAc modification.

It is found in the cell membrane. The protein localises to the golgi apparatus membrane. The protein resides in the golgi apparatus. It localises to the trans-Golgi network membrane. Its subcellular location is the cytoplasmic vesicle. It catalyses the reaction [hyaluronan](n) + UDP-N-acetyl-alpha-D-glucosamine = N-acetyl-beta-D-glucosaminyl-(1-&gt;4)-[hyaluronan](n) + UDP + H(+). The enzyme catalyses N-acetyl-beta-D-glucosaminyl-(1-&gt;4)-[hyaluronan](n) + UDP-alpha-D-glucuronate = [hyaluronan](n+1) + UDP + H(+). It functions in the pathway glycan biosynthesis; hyaluronan biosynthesis. Its function is as follows. Catalyzes the addition of GlcNAc or GlcUA monosaccharides to the nascent hyaluronan polymer. Therefore, it is essential to hyaluronan synthesis a major component of most extracellular matrices that has a structural role in tissues architectures and regulates cell adhesion, migration and differentiation. This is one of three isoenzymes responsible for cellular hyaluronan synthesis. This Mus musculus (Mouse) protein is Hyaluronan synthase 3 (Has3).